The chain runs to 127 residues: 13 kDa ribonucleoprotein-associated protein (127 aa).

Belongs to the eukaryotic ribosomal protein eL8 family. In terms of assembly, component of the U3 snoRNP particle. Binds to the C'/D and B/C motifs in U3 snoRNA. Component of the 25S U4/U6.U5 tri-snRNP particle, a subcomplex of the spliceosome. Binds to the 5' stem-loop of U4 snRNA.

Its subcellular location is the nucleus. The protein resides in the nucleolus. In terms of biological role, common component of the spliceosome and rRNA processing machinery. In association with the spliceosomal U4/U6.U5 tri-snRNP particle, required for splicing of pre-mRNA. In association with box C/D snoRNPs, required for processing of pre-ribosomal RNA (rRNA) and site-specific 2'-O-methylation of substrate RNAs. Essential for the accumulation and stability of U4 snRNA, U6 snRNA, and box C/D snoRNAs. This is 13 kDa ribonucleoprotein-associated protein (SNU13) from Cryptococcus neoformans var. neoformans serotype D (strain B-3501A) (Filobasidiella neoformans).